We begin with the raw amino-acid sequence, 355 residues long: N-acylethanolamine-hydrolyzing acid amidase (355 aa).

The signal sequence occupies residues 1–17; the sequence is MLLLQIILLLLPVICSA. C122 (nucleophile) is an active-site residue. Residues N150, N160, and N328 are each glycosylated (N-linked (GlcNAc...) asparagine).

This sequence belongs to the acid ceramidase family. Heterodimer of an alpha and a beta subunit, produced by autocatalytic cleavage. In terms of processing, N-glycosylated. Post-translationally, autoproteolytic cleavage at pH 4.5 gives rise to the alpha and beta subunit. Cleavage gives rise to a conformation change that activates the enzyme. The same catalytic Cys residue mediates the autoproteolytic cleavage and subsequent hydrolysis of lipid substrates.

The protein resides in the lysosome. It localises to the membrane. The enzyme catalyses N-hexadecanoylethanolamine + H2O = ethanolamine + hexadecanoate. The catalysed reaction is an N-(long-chain fatty acyl)ethanolamine + H2O = a long-chain fatty acid + ethanolamine. It functions in the pathway lipid metabolism; fatty acid metabolism. Its function is as follows. Degrades bioactive fatty acid amides, such as N-palmitoylethanolamine, to ethanolamine and free fatty acids. In Caenorhabditis elegans, this protein is N-acylethanolamine-hydrolyzing acid amidase.